We begin with the raw amino-acid sequence, 234 residues long: uncharacterized protein (234 aa).

An HTH tetR-type domain is found at 24 to 83 (VERRNELVDGTIEAIRRHGRFLSMDEIAAEIGVSKTVLYRYFVDKNDLTTAVMMRFTQTT). Residues 46–65 (SMDEIAAEIGVSKTVLYRYF) constitute a DNA-binding region (H-T-H motif).

This is an uncharacterized protein from Mycobacterium tuberculosis (strain CDC 1551 / Oshkosh).